The sequence spans 409 residues: MVQRPRGTRDFLPDEMEARRMIEGRMREAVRRWGYREVATPIFEDLSLFTMRSGQGIIDEMYVFQDKGGRDLALRPELTAAVLRMYVNEARVLAKPLRWCYFADCFRYERPQKGRYRQFWQFGVELIGADTAAADAEVILVADNAIRSSGLDYDLKIGHLGLMKHLLADVGEEVRRKVMAYLDKKEFDGLKDYLETAGLAALTDPLTRLLAAETLDEAFAVTGPLPEEGRIREMAALLDATGVRYSYNFGIARGLDYYTGMVFEGFAKNLGAESQIVGGGAYRLAQVFGGDDAPSVGFAIGFDRVMVALGEVQTRKQKIVGVVSTAEGRPFAFRVANAFRTAGIRADLDLSDRGLGAQLARAAKEADFAVLIGEREVATGTVTLKNLATGTQTAVTIDLAVRTVIDGSR.

It belongs to the class-II aminoacyl-tRNA synthetase family.

It localises to the cytoplasm. It catalyses the reaction tRNA(His) + L-histidine + ATP = L-histidyl-tRNA(His) + AMP + diphosphate + H(+). The protein is Histidine--tRNA ligase of Methanosphaerula palustris (strain ATCC BAA-1556 / DSM 19958 / E1-9c).